Consider the following 455-residue polypeptide: Tyramine receptor Ser-2 (455 aa).

The Extracellular portion of the chain corresponds to 1-60 (MFRNYTDSVQEMVLRAIDSIRDSVINASSAVSTTTLPPLDIPMTSMKPPSIIPTVELVLG). N-linked (GlcNAc...) asparagine glycans are attached at residues N4 and N26. Residues 61 to 83 (TITYLVIIAMTVVGNTLVVVAVF) form a helical membrane-spanning segment. Over 84–93 (SYRPLKKVQN) the chain is Cytoplasmic. A helical transmembrane segment spans residues 94–115 (YFLVSLAASDLAVAIFVMPLHV). Topologically, residues 116-133 (VTFLAGGKWLLGVTVCQF) are extracellular. An intrachain disulfide couples C131 to C209. Residues 134 to 154 (FTTADILLCTSSILNLCAIAL) form a helical membrane-spanning segment. Residues 155-174 (DRYWAIHNPINYAQKRTTKF) lie on the Cytoplasmic side of the membrane. The chain crosses the membrane as a helical span at residues 175–197 (VCIVIVIVWILSMLISVPPIIGW). At 198–221 (NNWQENMMEDSCGLSTEKAFVVFS) the chain is on the extracellular side. The chain crosses the membrane as a helical span at residues 222-243 (AAGSFFLPLLVMVVVYVKIFIS). Residues 244–370 (ARQRIRTNRG…VAKEKRAAKT (127 aa)) are Cytoplasmic-facing. A helical membrane pass occupies residues 371–392 (IAVIIFVFSFCWLPFFVAYVIR). Topologically, residues 393 to 407 (PFCETCKLHAKVEQA) are extracellular. Residues 408–428 (FTWLGYINSSLNPFLYGILNL) form a helical membrane-spanning segment. The Cytoplasmic portion of the chain corresponds to 429 to 455 (EFRRAFKKILCPKAVLEQRRRRMSAQP).

Belongs to the G-protein coupled receptor 1 family. The different isoforms are expressed in specific, but overlapping sets of sensory, inter- and motor neurons, including AIY, AIZ and RIA interneurons. They are also expressed in pharyngeal cells, head muscles and excretory gland cells.

Its subcellular location is the cell membrane. Functionally, G-protein coupled receptor for tyramine, a known neurotransmitter and neuromodulator and direct precursor of octopamine. The rank order of potency is tyramine &gt; octopamine &gt; dopamine &gt; serotonin &gt; epinephrine = norepinephrine. In Caenorhabditis elegans, this protein is Tyramine receptor Ser-2 (ser-2).